The primary structure comprises 414 residues: Secernin-1 (414 aa).

Position 2 is an N-acetylalanine (Ala-2). Cys-9 is an active-site residue.

It belongs to the peptidase C69 family. Secernin subfamily.

It localises to the cytoplasm. Regulates exocytosis in mast cells. Increases both the extent of secretion and the sensitivity of mast cells to stimulation with calcium. This chain is Secernin-1 (SCRN1), found in Homo sapiens (Human).